The primary structure comprises 341 residues: Transcription factor ETV7 (341 aa).

The region spanning 33 to 117 is the PNT domain; that stretch reads NLLGEGGICK…ELLQYIKTQR (85 aa). The segment at residues 224 to 305 is a DNA-binding region (ETS); that stretch reads RLLWDYVYQL…PGQKLLFRFL (82 aa). The interval 315–341 is disordered; it reads KHSHLEPLESQEQDRIEFKDKRPEISP.

This sequence belongs to the ETS family. In terms of tissue distribution, expressed in hematopoietic tissues.

It localises to the nucleus. Its function is as follows. Transcriptional repressor; binds to the DNA sequence 5'-CCGGAAGT-3'. Isoform A does not seem to have a repressor activity. Isoform C does not seem to have a repressor activity. In Homo sapiens (Human), this protein is Transcription factor ETV7 (ETV7).